Reading from the N-terminus, the 335-residue chain is MSHSSGIPASQELISAFGSANTGDVRLIKVVIKNDELVVDQKLNVQSDFETDLELAHSVLQKDSPCYILYKKDDKSIELTGYNWIFMFFVPDNAKVREKMTYAATRGNLKRELGASHFVDEIYSSNMNDFSKKGYQQHKLHQESEAPLTMEEQQRNDEKEQGLFVGGGGSGMHVHGISFPVDSDASTAVSNFINKKFNYIELSVNVDDEKIIFSSSSNIDIEAISSKISSTEPSFHFFRYSHQHEGENLDSIIYIYSCPDGSNGTKSAPVRKRMLFSSSKANVEQLVTSHNVKIDLKLEINSPSEISEESIINELHPPKVEEKKAFSKPSRPGRK.

2 consecutive ADF-H domains span residues 4-140 (SSGI…QHKL) and 176-316 (GISF…NELH). The disordered stretch occupies residues 307–335 (SEESIINELHPPKVEEKKAFSKPSRPGRK). Positions 316-325 (HPPKVEEKKA) are enriched in basic and acidic residues.

Belongs to the actin-binding proteins ADF family. Twinfilin subfamily. In terms of assembly, interacts with G-actin; ADP-actin form.

It localises to the cytoplasm. The protein resides in the cytoskeleton. Its subcellular location is the cell cortex. Functionally, actin-binding protein involved in motile and morphological processes. Inhibits actin polymerization, likely by sequestering G-actin. The sequence is that of Twinfilin (twfA) from Dictyostelium discoideum (Social amoeba).